Consider the following 153-residue polypeptide: Insulin-like growth factor 1 (153 aa).

Residues 49-77 form a b region; the sequence is GPETLCGAELVDALQFVCGDRGFYFNKPT. Intrachain disulfides connect cysteine 54–cysteine 96, cysteine 66–cysteine 109, and cysteine 95–cysteine 100. Positions 78–89 are c; sequence GYGSSSRRAPQT. Positions 90–110 are a; sequence GIVDECCFRSCDLRRLEMYCA. The interval 111–118 is d; the sequence is PLKPAKSA. Residues 119-153 constitute a propeptide, e peptide; sequence RSVRAQRHTDMPKAQKEVHLKNASRGSAGNKNYRM. Positions 120 to 153 are disordered; that stretch reads SVRAQRHTDMPKAQKEVHLKNASRGSAGNKNYRM. The span at 125-138 shows a compositional bias: basic and acidic residues; that stretch reads RHTDMPKAQKEVHL. Positions 142 to 153 are enriched in polar residues; sequence SRGSAGNKNYRM.

This sequence belongs to the insulin family. As to quaternary structure, forms a ternary complex with IGFR1 and ITGAV:ITGB3. Forms a ternary complex with IGFR1 and ITGA6:ITGB4. Forms a ternary complex with IGFBP3 and ALS.

The protein resides in the secreted. Its function is as follows. The insulin-like growth factors, isolated from plasma, are structurally and functionally related to insulin but have a much higher growth-promoting activity. May be a physiological regulator of [1-14C]-2-deoxy-D-glucose (2DG) transport and glycogen synthesis in osteoblasts. Stimulates glucose transport in bone-derived osteoblastic (PyMS) cells and is effective at much lower concentrations than insulin, not only regarding glycogen and DNA synthesis but also with regard to enhancing glucose uptake. May play a role in synapse maturation. Ca(2+)-dependent exocytosis of IGF1 is required for sensory perception of smell in the olfactory bulb. Acts as a ligand for IGF1R. Binds to the alpha subunit of IGF1R, leading to the activation of the intrinsic tyrosine kinase activity which autophosphorylates tyrosine residues in the beta subunit thus initiating a cascade of down-stream signaling events leading to activation of the PI3K-AKT/PKB and the Ras-MAPK pathways. Binds to integrins ITGAV:ITGB3 and ITGA6:ITGB4. Its binding to integrins and subsequent ternary complex formation with integrins and IGFR1 are essential for IGF1 signaling. Induces the phosphorylation and activation of IGFR1, MAPK3/ERK1, MAPK1/ERK2 and AKT1. As part of the MAPK/ERK signaling pathway, acts as a negative regulator of apoptosis in cardiomyocytes via promotion of STUB1/CHIP-mediated ubiquitination and degradation of ICER-type isoforms of CREM. In Panthera tigris altaica (Siberian tiger), this protein is Insulin-like growth factor 1.